Reading from the N-terminus, the 245-residue chain is DNA repair protein RecO (245 aa).

It belongs to the RecO family.

Involved in DNA repair and RecF pathway recombination. In Porphyromonas gingivalis (strain ATCC 33277 / DSM 20709 / CIP 103683 / JCM 12257 / NCTC 11834 / 2561), this protein is DNA repair protein RecO.